We begin with the raw amino-acid sequence, 947 residues long: MTPLSSPLSQYCQTVVERLPEGFTETSLSAQAKSVLTFSDFALDSVIAHPEWLAELESASPQADEWRHYAGWLQEALAGVCDDASLMRELRLFRRRIMVRIAWAQTLSLVDDETILQQLSHLAETLIVGARDWLYAACCREWGTPCNPQGVPQPLLILGMGKLGGGELNFSSDIDLIFAWPEHGETRGGRRELDNAQFFTRLGQRLIKALDQPTMDGFVYRVDMRLRPFGDSGPLVLSFAALEDYYQEQGRDWERYAMVKARLMGDNDDAWSRELRAMLRPFVFRRYIDFSVIQSLRNMKGMIAREVRRRGLKDNIKLGAGGIREIEFIVQVFQLIRGGREPSLQSRSLLPTLDAIAALHLLPENDVAQLRMAYLFLRRLENLLQSINDEQTQTLPADDLNRARLAWGMKAENWPQLVGELTDHMANVRRVFNELIGDDEADTPQEEERSEPWREVWQDALQEDDSTPVLAHLADEDRRQVLTLIADFRKELDKRPIGPRGRQVLDQLMPHLLANVCSREDAAVTLSRITPLLAGIVTRTTYLELLSEFPGALKHLIMLCAASPMIASQLARYPLLLDELLDPGTLYQPTATDAYRDELRQYLLRVPEEDEEQQLEALRQFKQAQLLRIAAADIAGTLPVMKVSDHLTWLAEAMIDAVVQQAWTQMVARYGQPAHLDERQGRGFAVVGYGKLGGWELGYSSDLDLIFLHDCPMDVMTNGEREIDGRQFYLRLAQRIMHLFSTRTSSGILYEVDARLRPSGAAGMLVTSADAFADYQQHEAWTWEHQALVRARVVYGDPQLTSQFDAVRRTIMTTARDGKTLQTEVREMREKMRAHLGNKHRDRFDIKADEGGITDIEFIAQYLVLRYAHEKPKLTRWSDNVRILELLAQNGIMDEHEAQALTVAYTTLRDELHHLALQELPGHVAQTCFSKERALVQASWRKWLVAV.

Residues 1–440 (MTPLSSPLSQ…VFNELIGDDE (440 aa)) are adenylyl removase. The tract at residues 450–947 (SEPWREVWQD…ASWRKWLVAV (498 aa)) is adenylyl transferase.

It belongs to the GlnE family. Mg(2+) serves as cofactor.

The enzyme catalyses [glutamine synthetase]-O(4)-(5'-adenylyl)-L-tyrosine + phosphate = [glutamine synthetase]-L-tyrosine + ADP. It carries out the reaction [glutamine synthetase]-L-tyrosine + ATP = [glutamine synthetase]-O(4)-(5'-adenylyl)-L-tyrosine + diphosphate. Its function is as follows. Involved in the regulation of glutamine synthetase GlnA, a key enzyme in the process to assimilate ammonia. When cellular nitrogen levels are high, the C-terminal adenylyl transferase (AT) inactivates GlnA by covalent transfer of an adenylyl group from ATP to specific tyrosine residue of GlnA, thus reducing its activity. Conversely, when nitrogen levels are low, the N-terminal adenylyl removase (AR) activates GlnA by removing the adenylyl group by phosphorolysis, increasing its activity. The regulatory region of GlnE binds the signal transduction protein PII (GlnB) which indicates the nitrogen status of the cell. The protein is Bifunctional glutamine synthetase adenylyltransferase/adenylyl-removing enzyme of Salmonella paratyphi A (strain ATCC 9150 / SARB42).